The primary structure comprises 207 residues: Superoxide dismutase [Mn] (207 aa).

The Mn(2+) site is built by H28, H76, D160, and H164.

The protein belongs to the iron/manganese superoxide dismutase family. Requires Mn(2+) as cofactor.

It catalyses the reaction 2 superoxide + 2 H(+) = H2O2 + O2. In terms of biological role, destroys superoxide anion radicals which are normally produced within the cells and which are toxic to biological systems. This Nocardia asteroides protein is Superoxide dismutase [Mn] (sodA).